A 130-amino-acid polypeptide reads, in one-letter code: Small ribosomal subunit protein uS9 (130 aa).

Belongs to the universal ribosomal protein uS9 family.

This is Small ribosomal subunit protein uS9 from Bordetella bronchiseptica (strain ATCC BAA-588 / NCTC 13252 / RB50) (Alcaligenes bronchisepticus).